Reading from the N-terminus, the 257-residue chain is 5'-nucleotidase SurE (257 aa).

The a divalent metal cation site is built by D11, D12, S42, and N99.

The protein belongs to the SurE nucleotidase family. It depends on a divalent metal cation as a cofactor.

It localises to the cytoplasm. The enzyme catalyses a ribonucleoside 5'-phosphate + H2O = a ribonucleoside + phosphate. Functionally, nucleotidase that shows phosphatase activity on nucleoside 5'-monophosphates. This Flavobacterium psychrophilum (strain ATCC 49511 / DSM 21280 / CIP 103535 / JIP02/86) protein is 5'-nucleotidase SurE.